We begin with the raw amino-acid sequence, 1390 residues long: DNA-directed RNA polymerase subunit beta (1390 aa).

It belongs to the RNA polymerase beta chain family. The RNAP catalytic core consists of 2 alpha, 1 beta, 1 beta' and 1 omega subunit. When a sigma factor is associated with the core the holoenzyme is formed, which can initiate transcription.

The enzyme catalyses RNA(n) + a ribonucleoside 5'-triphosphate = RNA(n+1) + diphosphate. In terms of biological role, DNA-dependent RNA polymerase catalyzes the transcription of DNA into RNA using the four ribonucleoside triphosphates as substrates. The protein is DNA-directed RNA polymerase subunit beta of Gluconobacter oxydans (strain 621H) (Gluconobacter suboxydans).